Consider the following 400-residue polypeptide: 3-hydroxykynurenine transaminase (400 aa).

A binds to and confers specificity for 3-hydroxykynurenine; shared with dimeric partner region spans residues S43–N44. Residues S77–H79, S154, and Q204 each bind pyridoxal 5'-phosphate. Residue S154 participates in substrate binding. K205 is subject to N6-(pyridoxal phosphate)lysine. Pyridoxal 5'-phosphate is bound by residues Y256 and T259. R356 is a binding site for substrate.

The protein belongs to the class-V pyridoxal-phosphate-dependent aminotransferase family. As to quaternary structure, homodimer. May form homotetramer. Pyridoxal 5'-phosphate serves as cofactor.

It is found in the peroxisome. The catalysed reaction is glyoxylate + L-alanine = glycine + pyruvate. It catalyses the reaction L-kynurenine + glyoxylate = kynurenate + glycine + H2O. The enzyme catalyses 3-hydroxy-L-kynurenine + glyoxylate = xanthurenate + glycine + H2O. It carries out the reaction 3-hydroxy-L-kynurenine + pyruvate = xanthurenate + L-alanine + H2O. The catalysed reaction is L-kynurenine + pyruvate = kynurenate + L-alanine + H2O. It catalyses the reaction 2-oxobutanoate + L-alanine = (2S)-2-aminobutanoate + pyruvate. The enzyme catalyses L-phenylalanine + pyruvate = 3-phenylpyruvate + L-alanine. It carries out the reaction L-serine + pyruvate = 3-hydroxypyruvate + L-alanine. The catalysed reaction is L-cysteine + pyruvate = 2-oxo-3-sulfanylpropanoate + L-alanine. It catalyses the reaction 3-hydroxy-L-kynurenine + oxaloacetate = 4-(2-amino-3-hydroxyphenyl)-2,4-dioxobutanoate + L-aspartate. The enzyme catalyses 3-hydroxy-L-kynurenine + 3-phenylpyruvate = 4-(2-amino-3-hydroxyphenyl)-2,4-dioxobutanoate + L-phenylalanine. It carries out the reaction L-kynurenine + oxaloacetate = 4-(2-aminophenyl)-2,4-dioxobutanoate + L-aspartate. The catalysed reaction is 3-phenylpyruvate + L-kynurenine = 4-(2-aminophenyl)-2,4-dioxobutanoate + L-phenylalanine. Its pathway is amino-acid degradation; L-kynurenine degradation; kynurenate from L-kynurenine: step 1/2. In terms of biological role, catalyzes the pyridoxal 5'-phosphate-dependent transamination of both 3-hydroxykynurenine and L-kynurenine to xanthurenic acid and kynurenic acid, respectively, preferentially using the alpha-ketoacid pyruvate, glyoxylate or oxaloacetate as the amino group acceptor. The affinity and catalytic efficiency for 3-hydroxykynurenine is higher than for L-kynurenine. Involved in the detoxification of cytotoxic metabolite 3-hydroxykynurenine generated by the hydroxylation of L-kynurenine, an intermediate in the tryptophan catabolism pathway. Also catalyzes, although with a lesser efficiency, the transamination of alanine with glyoxylate as an amino group acceptor. May play a role in the detoxification of glyoxylate, a toxic plant metabolite from the diet. In Aedes aegypti (Yellowfever mosquito), this protein is 3-hydroxykynurenine transaminase.